The primary structure comprises 1102 residues: Endocytosis protein end4 (1102 aa).

One can recognise an ENTH domain in the interval 9–139 (DHMQSDASLM…SFHAQHPEFN (131 aa)). Residues 265–334 (PHDPPDLEGD…SEPEPIQDFW (70 aa)) form a disordered region. Positions 292 to 305 (TGASTIAPQPTGTS) are enriched in polar residues. A coiled-coil region spans residues 338–661 (TLDQQLAAQQ…ESLLQLSKLQ (324 aa)). The I/LWEQ domain maps to 858-1100 (LLNAPGENIE…DMRKTSYHVA (243 aa)).

It belongs to the SLA2 family.

It localises to the cytoplasm. The protein localises to the cytoskeleton. Required for cellular morphogenesis and polarization of the cortical cytoskeleton. Required for establishment of new polarized growth zones where it acts in actin organization. Involved plasma membrane internalization and is essential for fluid-phase endocytosis. This Schizosaccharomyces pombe (strain 972 / ATCC 24843) (Fission yeast) protein is Endocytosis protein end4 (end4).